The primary structure comprises 157 residues: Sorting nexin-3 (157 aa).

Positions 1–21 (MSKPFQPISDVINTSPKNKSQ) are disordered. Over residues 11-21 (VINTSPKNKSQ) the composition is skewed to polar residues. Residues 32 to 152 (NFLEIEVKNP…EFIQNEKWDP (121 aa)) enclose the PX domain. Positions 75, 77, 101, and 117 each coordinate a 1,2-diacyl-sn-glycero-3-phospho-(1D-myo-inositol-3-phosphate).

This sequence belongs to the sorting nexin family.

The protein resides in the cytoplasm. It is found in the golgi apparatus membrane. Its subcellular location is the prevacuolar compartment membrane. Required for retention of late Golgi membrane proteins. Component of the retrieval machinery that functions by direct interaction with the cytosolic tails of certain TGN membrane proteins during the sorting/budding process at the prevacuolar compartment. Binds phosphatidylinositol 3-phosphate (PtdIns(P3)). The sequence is that of Sorting nexin-3 (SNX3) from Candida albicans (strain SC5314 / ATCC MYA-2876) (Yeast).